We begin with the raw amino-acid sequence, 177 residues long: Insertion element IS1223 uncharacterized 20.7 kDa protein (177 aa).

Residues 112–131 (KQKGRPRKVPKKSKKTTKKL) are disordered. Residues 113 to 128 (QKGRPRKVPKKSKKTT) are compositionally biased toward basic residues.

Belongs to the IS150/IS1296 orfA family.

In Lactobacillus johnsonii, this protein is Insertion element IS1223 uncharacterized 20.7 kDa protein.